Here is a 598-residue protein sequence, read N- to C-terminus: UvrABC system protein C (598 aa).

Positions 14-91 constitute a GIY-YIG domain; the sequence is DSPGCYLHKD…IQKNMPKYNI (78 aa). The UVR domain occupies 196–231; that stretch reads DKIIEDLRSKMLAASKEMAFERAAEYRDLISGIATM.

The protein belongs to the UvrC family. As to quaternary structure, interacts with UvrB in an incision complex.

The protein localises to the cytoplasm. The UvrABC repair system catalyzes the recognition and processing of DNA lesions. UvrC both incises the 5' and 3' sides of the lesion. The N-terminal half is responsible for the 3' incision and the C-terminal half is responsible for the 5' incision. The sequence is that of UvrABC system protein C from Streptococcus pyogenes serotype M1.